The sequence spans 339 residues: UDP-N-acetylenolpyruvoylglucosamine reductase (339 aa).

Residues glycine 18–valine 189 enclose the FAD-binding PCMH-type domain. Residue arginine 166 is part of the active site. Serine 239 acts as the Proton donor in catalysis. Residue glutamate 335 is part of the active site.

Belongs to the MurB family. It depends on FAD as a cofactor.

The protein resides in the cytoplasm. The catalysed reaction is UDP-N-acetyl-alpha-D-muramate + NADP(+) = UDP-N-acetyl-3-O-(1-carboxyvinyl)-alpha-D-glucosamine + NADPH + H(+). It functions in the pathway cell wall biogenesis; peptidoglycan biosynthesis. Its function is as follows. Cell wall formation. The protein is UDP-N-acetylenolpyruvoylglucosamine reductase of Pseudomonas fluorescens (strain ATCC BAA-477 / NRRL B-23932 / Pf-5).